Reading from the N-terminus, the 180-residue chain is Large ribosomal subunit protein uL6 (180 aa).

Belongs to the universal ribosomal protein uL6 family. As to quaternary structure, part of the 50S ribosomal subunit.

In terms of biological role, this protein binds to the 23S rRNA, and is important in its secondary structure. It is located near the subunit interface in the base of the L7/L12 stalk, and near the tRNA binding site of the peptidyltransferase center. This chain is Large ribosomal subunit protein uL6, found in Borrelia duttonii (strain Ly).